The following is a 636-amino-acid chain: Probable Xaa-Pro aminopeptidase P (636 aa).

4 residues coordinate Mn(2+): Asp414, Asp425, Glu523, and Glu537.

Belongs to the peptidase M24B family. Requires Mn(2+) as cofactor.

The enzyme catalyses Release of any N-terminal amino acid, including proline, that is linked to proline, even from a dipeptide or tripeptide.. Catalyzes the removal of a penultimate prolyl residue from the N-termini of peptides. The chain is Probable Xaa-Pro aminopeptidase P (AMPP) from Ajellomyces capsulatus (strain H143) (Darling's disease fungus).